Reading from the N-terminus, the 682-residue chain is Zinc finger protein 16 (682 aa).

Over residues 1 to 10 the composition is skewed to basic and acidic residues; that stretch reads MPSLRTRREE. Positions 1–38 are disordered; sequence MPSLRTRREEAEMELSAPGPSPWTPAAQARVSDAPAVT. The segment at 62-210 is necessary for transcription activation; the sequence is YQQPDCDTRT…GVPTAESPLI (149 aa). A C2H2-type 1; degenerate zinc finger spans residues 209 to 231; the sequence is LICNECGKTFRGNPDLIQRQIVH. The C2H2-type 2; degenerate zinc-finger motif lies at 237–259; that stretch reads FMCDDCGKTFSQNSVLKNRHRSH. Residue Lys-253 forms a Glycyl lysine isopeptide (Lys-Gly) (interchain with G-Cter in SUMO2) linkage. 8 consecutive C2H2-type zinc fingers follow at residues 265-287, 293-315, 321-343, 349-371, 377-399, 405-427, 433-455, and 461-483; these read YQCS…QSHH, YTCT…QKSH, YECN…QRIH, YVCS…HRTH, FECG…QRVH, YECN…HRVH, YKCS…RRIH, and HVCN…QIIH. 2 required for nuclear localization regions span residues 268-393 and 341-373; these read SECG…AHLR and RIHS…THTG. A required for nuclear localization region spans residues 473–503; sequence SSVLRKHQIIHTGEKPYRCSVCGKAFSHSSA. Lys-487 carries the post-translational modification N6-acetyllysine. 7 C2H2-type zinc fingers span residues 489–511, 517–539, 545–567, 573–595, 601–623, 629–651, and 657–679; these read YRCS…QGVH, YACH…QRVH, YECT…QRIH, HECN…QKVH, YTCV…QIIH, YKCS…QRIH, and YDCA…QLIH.

This sequence belongs to the krueppel C2H2-type zinc-finger protein family. In terms of assembly, interacts with INCA1; the interaction inhibits INCA1 activity and induces the cell cycle process.

The protein resides in the nucleus. In terms of biological role, acts as a transcriptional activator. Promotes cell proliferation by facilitating the cell cycle phase transition from the S to G2/M phase. Involved in both the hemin- and phorbol myristate acetate (PMA)-induced erythroid and megakaryocytic differentiation, respectively. Also plays a role as an inhibitor of cell apoptosis. This chain is Zinc finger protein 16 (ZNF16), found in Pan troglodytes (Chimpanzee).